Here is a 273-residue protein sequence, read N- to C-terminus: Dermonecrotic toxin SdSicTox-betaIIB1bxiv (273 aa).

The active site involves histidine 4. Positions 24 and 26 each coordinate Mg(2+). Histidine 40 (nucleophile) is an active-site residue. 2 disulfide bridges follow: cysteine 44–cysteine 50 and cysteine 46–cysteine 189. Aspartate 84 contacts Mg(2+).

It belongs to the arthropod phospholipase D family. Class II subfamily. The cofactor is Mg(2+). As to expression, expressed by the venom gland.

It localises to the secreted. It carries out the reaction an N-(acyl)-sphingosylphosphocholine = an N-(acyl)-sphingosyl-1,3-cyclic phosphate + choline. It catalyses the reaction an N-(acyl)-sphingosylphosphoethanolamine = an N-(acyl)-sphingosyl-1,3-cyclic phosphate + ethanolamine. The enzyme catalyses a 1-acyl-sn-glycero-3-phosphocholine = a 1-acyl-sn-glycero-2,3-cyclic phosphate + choline. The catalysed reaction is a 1-acyl-sn-glycero-3-phosphoethanolamine = a 1-acyl-sn-glycero-2,3-cyclic phosphate + ethanolamine. Its function is as follows. Dermonecrotic toxins cleave the phosphodiester linkage between the phosphate and headgroup of certain phospholipids (sphingolipid and lysolipid substrates), forming an alcohol (often choline) and a cyclic phosphate. This toxin acts on sphingomyelin (SM). It may also act on ceramide phosphoethanolamine (CPE), lysophosphatidylcholine (LPC) and lysophosphatidylethanolamine (LPE), but not on lysophosphatidylserine (LPS), and lysophosphatidylglycerol (LPG). It acts by transphosphatidylation, releasing exclusively cyclic phosphate products as second products. Induces dermonecrosis, hemolysis, increased vascular permeability, edema, inflammatory response, and platelet aggregation. This Sicarius cf. damarensis (strain GJB-2008) (Six-eyed sand spider) protein is Dermonecrotic toxin SdSicTox-betaIIB1bxiv.